A 90-amino-acid polypeptide reads, in one-letter code: RNA-binding protein Hfq (90 aa).

The region spanning 10–70 is the Sm domain; the sequence is DGFLNLLRRE…LSTITPARPL (61 aa).

Belongs to the Hfq family. Homohexamer.

Its function is as follows. RNA chaperone that binds small regulatory RNA (sRNAs) and mRNAs to facilitate mRNA translational regulation in response to envelope stress, environmental stress and changes in metabolite concentrations. Also binds with high specificity to tRNAs. This Symbiobacterium thermophilum (strain DSM 24528 / JCM 14929 / IAM 14863 / T) protein is RNA-binding protein Hfq.